We begin with the raw amino-acid sequence, 163 residues long: MLARTIQRFSVVAKRGYAAAAPAANANPEELRLTFASPDTAVFSNAVVKQVDVPTLAGMVGVLANHVPTIGVLKPGVVSVTTNEGTVQRLFVSSGTLSVNIDGSCQVLAEEVLKVEEIDESAARAELDAAQRASGEGSEVARAEAQIRAEVAEALIKAATNQQ.

The N-terminal 18 residues, 1–18 (MLARTIQRFSVVAKRGYA), are a transit peptide targeting the mitochondrion.

The protein belongs to the ATPase epsilon chain family. As to quaternary structure, subunit of the F-type ATPase which has 2 components, CF(1) - the catalytic core - and CF(0) - the membrane proton channel.

It localises to the mitochondrion. The protein resides in the mitochondrion inner membrane. In terms of biological role, mitochondrial membrane ATP synthase (F(1)F(0) ATP synthase or Complex V) produces ATP from ADP in the presence of a proton gradient across the membrane which is generated by electron transport complexes of the respiratory chain. F-type ATPases consist of two structural domains, F(1) - containing the extramembraneous catalytic core, and F(0) - containing the membrane proton channel, linked together by a central stalk and a peripheral stalk. During catalysis, ATP turnover in the catalytic domain of F(1) is coupled via a rotary mechanism of the central stalk subunits to proton translocation. Part of the complex F(1) domain and of the central stalk which is part of the complex rotary element. The sequence is that of ATP synthase subunit delta, mitochondrial from Caenorhabditis elegans.